A 105-amino-acid polypeptide reads, in one-letter code: Large ribosomal subunit protein P2 (105 aa).

Belongs to the eukaryotic ribosomal protein P1/P2 family. In terms of assembly, P1 and P2 exist as dimers at the large ribosomal subunit. Phosphorylated.

Its function is as follows. Plays an important role in the elongation step of protein synthesis. This Leishmania braziliensis protein is Large ribosomal subunit protein P2 (LIP2).